Consider the following 1050-residue polypeptide: Isoleucine--tRNA ligase (1050 aa).

A 'HIGH' region motif is present at residues 45 to 56 (PYPSSPIPHIGT). The short motif at 594 to 598 (EMHKS) is the 'KMSKS' region element. K597 lines the ATP pocket.

This sequence belongs to the class-I aminoacyl-tRNA synthetase family. IleS type 2 subfamily. As to quaternary structure, monomer. Requires Zn(2+) as cofactor.

The protein resides in the cytoplasm. The enzyme catalyses tRNA(Ile) + L-isoleucine + ATP = L-isoleucyl-tRNA(Ile) + AMP + diphosphate. In terms of biological role, catalyzes the attachment of isoleucine to tRNA(Ile). As IleRS can inadvertently accommodate and process structurally similar amino acids such as valine, to avoid such errors it has two additional distinct tRNA(Ile)-dependent editing activities. One activity is designated as 'pretransfer' editing and involves the hydrolysis of activated Val-AMP. The other activity is designated 'posttransfer' editing and involves deacylation of mischarged Val-tRNA(Ile). The chain is Isoleucine--tRNA ligase from Sulfolobus acidocaldarius (strain ATCC 33909 / DSM 639 / JCM 8929 / NBRC 15157 / NCIMB 11770).